We begin with the raw amino-acid sequence, 166 residues long: Putative 4-hydroxy-4-methyl-2-oxoglutarate aldolase (166 aa).

Residues 81–84 (GDII) and arginine 103 contribute to the substrate site. Residue aspartate 104 participates in a divalent metal cation binding.

The protein belongs to the class II aldolase/RraA-like family. As to quaternary structure, homotrimer. A divalent metal cation is required as a cofactor.

It carries out the reaction 4-hydroxy-4-methyl-2-oxoglutarate = 2 pyruvate. The enzyme catalyses oxaloacetate + H(+) = pyruvate + CO2. Its function is as follows. Catalyzes the aldol cleavage of 4-hydroxy-4-methyl-2-oxoglutarate (HMG) into 2 molecules of pyruvate. Also contains a secondary oxaloacetate (OAA) decarboxylase activity due to the common pyruvate enolate transition state formed following C-C bond cleavage in the retro-aldol and decarboxylation reactions. This is Putative 4-hydroxy-4-methyl-2-oxoglutarate aldolase from Corynebacterium glutamicum (strain ATCC 13032 / DSM 20300 / JCM 1318 / BCRC 11384 / CCUG 27702 / LMG 3730 / NBRC 12168 / NCIMB 10025 / NRRL B-2784 / 534).